We begin with the raw amino-acid sequence, 226 residues long: Small ribosomal subunit protein uS2c (226 aa).

The protein belongs to the universal ribosomal protein uS2 family.

It localises to the plastid. The protein localises to the chloroplast. The protein is Small ribosomal subunit protein uS2c (rps2) of Phaeodactylum tricornutum (strain CCAP 1055/1).